The primary structure comprises 379 residues: Homoserine O-acetyltransferase (379 aa).

Positions 52–356 (NVVVVLHALT…VYGHDGFLVE (305 aa)) constitute an AB hydrolase-1 domain. The active-site Nucleophile is the Ser-157. Arg-227 lines the substrate pocket. Residues Asp-320 and His-350 contribute to the active site. Asp-351 contacts substrate.

The protein belongs to the AB hydrolase superfamily. MetX family. In terms of assembly, homodimer.

The protein localises to the cytoplasm. The enzyme catalyses L-homoserine + acetyl-CoA = O-acetyl-L-homoserine + CoA. It participates in amino-acid biosynthesis; L-methionine biosynthesis via de novo pathway; O-acetyl-L-homoserine from L-homoserine: step 1/1. Its function is as follows. Transfers an acetyl group from acetyl-CoA to L-homoserine, forming acetyl-L-homoserine. This is Homoserine O-acetyltransferase from Mycobacterium bovis (strain ATCC BAA-935 / AF2122/97).